Reading from the N-terminus, the 343-residue chain is Flap endonuclease 1 (343 aa).

Residues 1-98 (MGVPIGDLVP…KELEKRREAR (98 aa)) are N-domain. 7 residues coordinate Mg(2+): Asp-27, Asp-80, Glu-152, Glu-154, Asp-173, Asp-175, and Asp-236. Residues 116 to 258 (EARKYAQRAT…KALEIVRYSR (143 aa)) form an I-domain region. An interaction with PCNA region spans residues 330–338 (RQSTLESWF).

Belongs to the XPG/RAD2 endonuclease family. FEN1 subfamily. Interacts with PCNA. PCNA stimulates the nuclease activity without altering cleavage specificity. Mg(2+) serves as cofactor.

Structure-specific nuclease with 5'-flap endonuclease and 5'-3' exonuclease activities involved in DNA replication and repair. During DNA replication, cleaves the 5'-overhanging flap structure that is generated by displacement synthesis when DNA polymerase encounters the 5'-end of a downstream Okazaki fragment. Binds the unpaired 3'-DNA end and kinks the DNA to facilitate 5' cleavage specificity. Cleaves one nucleotide into the double-stranded DNA from the junction in flap DNA, leaving a nick for ligation. Also involved in the base excision repair (BER) pathway. Acts as a genome stabilization factor that prevents flaps from equilibrating into structures that lead to duplications and deletions. Also possesses 5'-3' exonuclease activity on nicked or gapped double-stranded DNA. The chain is Flap endonuclease 1 from Pyrococcus horikoshii (strain ATCC 700860 / DSM 12428 / JCM 9974 / NBRC 100139 / OT-3).